We begin with the raw amino-acid sequence, 147 residues long: Arginine vasopressin-induced protein 1 (147 aa).

Disordered stretches follow at residues 1 to 24 (MGTP…RGRK) and 104 to 147 (LANP…QIRH). Polar residues predominate over residues 105–119 (ANPQSATETASSEQY). Basic residues predominate over residues 121 to 134 (HSRKKSARIRRNWR). The segment covering 137 to 147 (GPTSYLHQIRH) has biased composition (polar residues).

Functionally, may be involved in MAP kinase activation, epithelial sodium channel (ENaC) down-regulation and cell cycling. In Homo sapiens (Human), this protein is Arginine vasopressin-induced protein 1 (AVPI1).